A 217-amino-acid chain; its full sequence is Small ribosomal subunit protein uS3 (217 aa).

A KH type-2 domain is found at 38–106 (IRQLIQTKLA…QVHINIVEIK (69 aa)).

The protein belongs to the universal ribosomal protein uS3 family. In terms of assembly, part of the 30S ribosomal subunit. Forms a tight complex with proteins S10 and S14.

Functionally, binds the lower part of the 30S subunit head. Binds mRNA in the 70S ribosome, positioning it for translation. The sequence is that of Small ribosomal subunit protein uS3 from Lactococcus lactis subsp. cremoris (strain MG1363).